The chain runs to 228 residues: Translin (228 aa).

A DNA/RNA binding region spans residues 86 to 90; the sequence is RFHEH. Residues 177-198 are leucine-zipper; the sequence is LDSGFRLLNLKNDSLRKRYDGL. Lys-187 is modified (N6-acetyllysine). Ser-190 is subject to Phosphoserine. Residue Lys-199 is modified to N6-acetyllysine.

This sequence belongs to the translin family. As to quaternary structure, ring-shaped heterooctamer of six TSN and two TSNAX subunits, DNA/RNA binding occurs inside the ring.

It is found in the cytoplasm. Its subcellular location is the nucleus. Its function is as follows. DNA-binding protein that specifically recognizes consensus sequences at the breakpoint junctions in chromosomal translocations, mostly involving immunoglobulin (Ig)/T-cell receptor gene segments. Seems to recognize single-stranded DNA ends generated by staggered breaks occurring at recombination hot spots. In terms of biological role, exhibits both single-stranded and double-stranded endoribonuclease activity. May act as an activator of RNA-induced silencing complex (RISC) by facilitating endonucleolytic cleavage of the siRNA passenger strand. In Bos taurus (Bovine), this protein is Translin (TSN).